The chain runs to 690 residues: MDGSEDDPTIFSARCLPSDPRLWATVTNSYLGTRVYHDTIHINGVYNGAVGDTHRASLPSPLNVQLEAPAGTEQLTETFTLDTNTGSFLHTLEGPSFRASQRIYAHRVLPHVLVFSVSIARLTTGNKPITVPLRADFSPESPDLDLRVGPDFQGLRYLHGHVLNPEQPGEPQQEVHMLWMPVPPALTLGEEEKDRTWEFLTVVGSSQAEAQDCFAEALQLQTRGVLYTIHADSWGRLWAGCGLDVAGPLALRQALRGSLYYLFSELPQPGTQGFISHGLSPGGLSNGSKEECYWGHIFWDQDIWMFPNILMFHPEAARAILEYRVRTLGGALKNGQNLGYQGAKFAWESASTGLEVCPEDIYGTQEIHINGAVALAFQLYYYYTQDSKLFQEDGGWDVVSSVAEFWCSRVEWSSQDKMYHLKGVMPPDEYHSGVNNSVYTNVLVQNSLHFAAALAKDLGLPIRKQWLEVADRIKIPFDSEQNFHPEFDGYERGEEVKQADVVLLGYPVPFPLTPDIRRKNLETYEAVTSPQGPAMTWSMFAVGWMELRDPSRAQVHLSRSFANVTEPFKVWTENADGSGAVNFLTGMGGFLQAALFGCTGFRITEAGVTFDPLCPDLVSRVSVSGISYLGNKINFAFSKDSVTLEVTARAEPWAPLLEAELWPSLAHLPLTPGQKVSFPHSAGRIQRSSP.

299–300 contributes to the substrate binding site; it reads WD. The active-site Proton donor is glutamate 429. 497–498 contributes to the substrate binding site; it reads KQ.

It belongs to the glycosyl hydrolase 65 family.

The enzyme catalyses (5R)-5-O-[alpha-D-glucosyl-(1-&gt;2)-beta-D-galactosyl]-5-hydroxy-L-lysyl-[collagen] + H2O = (5R)-5-O-(beta-D-galactosyl)-5-hydroxy-L-lysyl-[collagen] + D-glucose. In terms of biological role, catalyzes the hydrolysis of glucose from the disaccharide unit linked to hydroxylysine residues of collagen and collagen-like proteins. This Mus musculus (Mouse) protein is Protein-glucosylgalactosylhydroxylysine glucosidase.